We begin with the raw amino-acid sequence, 132 residues long: uncharacterized protein (132 aa).

Transmembrane regions (helical) follow at residues Leu7 to Phe29, Val44 to Leu62, Leu69 to Val88, and Gly108 to Phe130.

It is found in the cell membrane. This is an uncharacterized protein from Aquifex aeolicus (strain VF5).